Here is a 388-residue protein sequence, read N- to C-terminus: Succinate--CoA ligase [ADP-forming] subunit beta (388 aa).

An ATP-grasp domain is found at 9–244; the sequence is KQLFAEFGLP…PSQEDEREAH (236 aa). Residues K46, 53–55, E99, S102, and E107 each bind ATP; that span reads GRG. N199 and D213 together coordinate Mg(2+). Substrate contacts are provided by residues N264 and 321 to 323; that span reads GIV.

Belongs to the succinate/malate CoA ligase beta subunit family. Heterotetramer of two alpha and two beta subunits. Mg(2+) is required as a cofactor.

It carries out the reaction succinate + ATP + CoA = succinyl-CoA + ADP + phosphate. It catalyses the reaction GTP + succinate + CoA = succinyl-CoA + GDP + phosphate. The protein operates within carbohydrate metabolism; tricarboxylic acid cycle; succinate from succinyl-CoA (ligase route): step 1/1. Succinyl-CoA synthetase functions in the citric acid cycle (TCA), coupling the hydrolysis of succinyl-CoA to the synthesis of either ATP or GTP and thus represents the only step of substrate-level phosphorylation in the TCA. The beta subunit provides nucleotide specificity of the enzyme and binds the substrate succinate, while the binding sites for coenzyme A and phosphate are found in the alpha subunit. This Vibrio atlanticus (strain LGP32) (Vibrio splendidus (strain Mel32)) protein is Succinate--CoA ligase [ADP-forming] subunit beta.